The chain runs to 83 residues: MSSGGLLLLLGLLTLWAELTPVSSKDRPDFCHLPHETGPCKAKIQAFYYNPIYDTCLKFIYGGCEGNANNFKTMDECKRTCAE.

The N-terminal stretch at Met1–Ser24 is a signal peptide. Positions Cys31–Cys81 constitute a BPTI/Kunitz inhibitor domain. Disulfide bonds link Cys31–Cys81, Cys40–Cys64, and Cys56–Cys77.

The protein belongs to the venom Kunitz-type family. As to expression, expressed by the venom gland.

The protein resides in the secreted. Its function is as follows. Serine protease inhibitor. The polypeptide is Kunitz-type serine protease inhibitor 87 (Drysdalia coronoides (White-lipped snake)).